The following is a 303-amino-acid chain: NAC domain-containing protein 48 (303 aa).

Residues leucine 9–lysine 159 form the NAC domain.

In terms of assembly, interacts with NAC071. Widely expressed.

The protein localises to the nucleus. Functionally, transcription activator that binds to the promoter of the stress response gene LEA19. Involved in tolerance to abiotic stresses. Transcription activator involved in response to abiotic and biotic stresses. Involved in drought and salt stress responses, and defense response to the rice blast fungus. Transcription activator involved tolerance to cold and salt stresses. Transcription activator involved in tolerance to drought stress. Targets directly and activates genes involved in membrane modification, nicotianamine (NA) biosynthesis, glutathione relocation, accumulation of phosphoadenosine phosphosulfate and glycosylation in roots. Controls root growth at early vegetative stage through chromatin modification and histone lysine deacytaltion by HDAC1. The polypeptide is NAC domain-containing protein 48 (Oryza sativa subsp. japonica (Rice)).